Reading from the N-terminus, the 95-residue chain is Sec-independent protein translocase protein TatA (95 aa).

A helical transmembrane segment spans residues 1-21; the sequence is MGSMSVWHWVIVAVVVMLLFG. The interval 42–95 is disordered; the sequence is GMADDETQPNTATSVPPVGPNDPVRTLPHQGAPGTAPQPPHVQPHVPAGDHKAV.

Belongs to the TatA/E family. The Tat system comprises two distinct complexes: a TatABC complex, containing multiple copies of TatA, TatB and TatC subunits, and a separate TatA complex, containing only TatA subunits. Substrates initially bind to the TatABC complex, which probably triggers association of the separate TatA complex to form the active translocon.

It localises to the cell inner membrane. In terms of biological role, part of the twin-arginine translocation (Tat) system that transports large folded proteins containing a characteristic twin-arginine motif in their signal peptide across membranes. TatA could form the protein-conducting channel of the Tat system. This Methylorubrum extorquens (strain PA1) (Methylobacterium extorquens) protein is Sec-independent protein translocase protein TatA.